The sequence spans 370 residues: MQFESPIKRRKSRQIMVGDVAVGGDAPITIQSMTNTETTDVEATVAQIERIQMAGADIVRVSVPSMDAAEAFGAIRKRVSIPLVADIHFDYRIALRVADLGVDCLRINPGNIGREKRILAVVDKARDLNIPIRIGVNAGSLEKDLQTKYGEPTPDALVESALRHVEILDKYDFQNFKVSVKASDVFMAVAAYRKLATQIEQPLHLGITEAGGLRGGTVKSSVGLGMLLMDGIGDTIRVSLAADPVEEVKVGWDILKSLKLRSKGINFIACPSCSRQNFDVIKTMNELEMRLEDITTPLDVAVIGCVVNGPGEAKEVDVGLAGGTPKNLVYVNGVPSQKFEQENLVDSLEQLIRKQAAEKEAKEKDIIAKV.

Residues Cys-270, Cys-273, Cys-305, and Glu-312 each coordinate [4Fe-4S] cluster.

Belongs to the IspG family. [4Fe-4S] cluster serves as cofactor.

The enzyme catalyses (2E)-4-hydroxy-3-methylbut-2-enyl diphosphate + oxidized [flavodoxin] + H2O + 2 H(+) = 2-C-methyl-D-erythritol 2,4-cyclic diphosphate + reduced [flavodoxin]. It participates in isoprenoid biosynthesis; isopentenyl diphosphate biosynthesis via DXP pathway; isopentenyl diphosphate from 1-deoxy-D-xylulose 5-phosphate: step 5/6. Functionally, converts 2C-methyl-D-erythritol 2,4-cyclodiphosphate (ME-2,4cPP) into 1-hydroxy-2-methyl-2-(E)-butenyl 4-diphosphate. The protein is 4-hydroxy-3-methylbut-2-en-1-yl diphosphate synthase (flavodoxin) of Saccharophagus degradans (strain 2-40 / ATCC 43961 / DSM 17024).